A 391-amino-acid chain; its full sequence is Elongation factor Tu (391 aa).

The tr-type G domain maps to 10 to 201; that stretch reads KPHVNIGTIG…EVDNYIPTPE (192 aa). The segment at 19 to 26 is G1; it reads GHVDHGKT. GTP is bound at residue 19–26; it reads GHVDHGKT. Residue Thr-26 coordinates Mg(2+). The G2 stretch occupies residues 55-59; sequence GITIS. The tract at residues 76–79 is G3; the sequence is DCPG. GTP is bound by residues 76–80 and 131–134; these read DCPGH and NKVD. The segment at 131–134 is G4; it reads NKVD. The tract at residues 169–171 is G5; sequence SAL.

It belongs to the TRAFAC class translation factor GTPase superfamily. Classic translation factor GTPase family. EF-Tu/EF-1A subfamily. Monomer.

The protein resides in the cytoplasm. The catalysed reaction is GTP + H2O = GDP + phosphate + H(+). GTP hydrolase that promotes the GTP-dependent binding of aminoacyl-tRNA to the A-site of ribosomes during protein biosynthesis. This Bartonella henselae (strain ATCC 49882 / DSM 28221 / CCUG 30454 / Houston 1) (Rochalimaea henselae) protein is Elongation factor Tu.